The following is a 513-amino-acid chain: GMP synthase [glutamine-hydrolyzing] (513 aa).

Positions Leu-7–Asp-198 constitute a Glutamine amidotransferase type-1 domain. Cys-84 serves as the catalytic Nucleophile. Residues His-172 and Glu-174 contribute to the active site. The 190-residue stretch at Trp-199–Arg-388 folds into the GMPS ATP-PPase domain. Ser-226–Ser-232 lines the ATP pocket.

As to quaternary structure, homodimer.

The enzyme catalyses XMP + L-glutamine + ATP + H2O = GMP + L-glutamate + AMP + diphosphate + 2 H(+). It functions in the pathway purine metabolism; GMP biosynthesis; GMP from XMP (L-Gln route): step 1/1. Its function is as follows. Catalyzes the synthesis of GMP from XMP. This is GMP synthase [glutamine-hydrolyzing] from Symbiobacterium thermophilum (strain DSM 24528 / JCM 14929 / IAM 14863 / T).